Reading from the N-terminus, the 238-residue chain is Ribonuclease PH (238 aa).

Residues R86 and 124 to 126 (GTR) contribute to the phosphate site.

Belongs to the RNase PH family. Homohexameric ring arranged as a trimer of dimers.

The catalysed reaction is tRNA(n+1) + phosphate = tRNA(n) + a ribonucleoside 5'-diphosphate. In terms of biological role, phosphorolytic 3'-5' exoribonuclease that plays an important role in tRNA 3'-end maturation. Removes nucleotide residues following the 3'-CCA terminus of tRNAs; can also add nucleotides to the ends of RNA molecules by using nucleoside diphosphates as substrates, but this may not be physiologically important. Probably plays a role in initiation of 16S rRNA degradation (leading to ribosome degradation) during starvation. The sequence is that of Ribonuclease PH from Geotalea daltonii (strain DSM 22248 / JCM 15807 / FRC-32) (Geobacter daltonii).